An 893-amino-acid polypeptide reads, in one-letter code: DNA mismatch repair protein MutS (893 aa).

Position 631-638 (631-638 (GPNMAGKS)) interacts with ATP. Positions 821–858 (AGRPRVAVRQPQGGRRGASTGQLGLFGMEPAQGGTGVT) are disordered.

Belongs to the DNA mismatch repair MutS family.

Its function is as follows. This protein is involved in the repair of mismatches in DNA. It is possible that it carries out the mismatch recognition step. This protein has a weak ATPase activity. This is DNA mismatch repair protein MutS from Myxococcus xanthus (strain DK1622).